The chain runs to 493 residues: Chromosomal replication initiator protein DnaA (493 aa).

A domain I, interacts with DnaA modulators region spans residues 1 to 105 (MSDTIQQEAP…LMYSIVIDKS (105 aa)). Residues 105-152 (SQGQPVTIELPHQIDAAPAERSVRPEAPGQKASAERERLEIARPRFES) form a domain II region. The segment at 121 to 140 (APAERSVRPEAPGQKASAER) is disordered. The domain III, AAA+ region stretch occupies residues 153–370 (NLNPKYTFST…GCIVKLLAAH (218 aa)). ATP contacts are provided by glycine 198, glycine 200, lysine 201, and threonine 202. The domain IV, binds dsDNA stretch occupies residues 371-493 (SLDNQEIDLQ…LRKRIEIMSM (123 aa)).

Belongs to the DnaA family. As to quaternary structure, oligomerizes as a right-handed, spiral filament on DNA at oriC.

It is found in the cytoplasm. In terms of biological role, plays an essential role in the initiation and regulation of chromosomal replication. ATP-DnaA binds to the origin of replication (oriC) to initiate formation of the DNA replication initiation complex once per cell cycle. Binds the DnaA box (a 9 base pair repeat at the origin) and separates the double-stranded (ds)DNA. Forms a right-handed helical filament on oriC DNA; dsDNA binds to the exterior of the filament while single-stranded (ss)DNA is stabiized in the filament's interior. The ATP-DnaA-oriC complex binds and stabilizes one strand of the AT-rich DNA unwinding element (DUE), permitting loading of DNA polymerase. After initiation quickly degrades to an ADP-DnaA complex that is not apt for DNA replication. Binds acidic phospholipids. The sequence is that of Chromosomal replication initiator protein DnaA from Chlorobaculum tepidum (strain ATCC 49652 / DSM 12025 / NBRC 103806 / TLS) (Chlorobium tepidum).